Here is a 2224-residue protein sequence, read N- to C-terminus: MSNGYRTLSQHLNDLKKENFSLKLRIYFLEERMQQKYEVSREDVYKRNIELKVEVESLKRELQDRKQHLDKTWADAEDLNSQNEAELRRQVEERQQETEHVYELLGNKIQLLQEEPRLAKNEATEMETLVEAEKRCNLELSERWTNAAKNREDAAGDQEKPDQYSEALAQRDRRIEELRQSLAAQEGLVEQLSQEKRQLLHLLEEPASMEVQPVPKGLPTQQKPDLHETPTTQPPVSESHLAELQDKIQQTEATNKILQEKLNDLSCELKSAQESSQKQDTTIQSLKEMLKSRESETEELYQVIEGQNDTMAKLREMLHQSQLGQLHSSEGIAPAQQQVALLDLQSALFCSQLEIQRLQRLVRQKERQLADGKRCVQLVEAAAQEREHQKEAAWKHNQELRKALQHLQGELHSKSQQLHVLEAEKYNEIRTQGQNIQHLSHSLSHKEQLIQELQELLQYRDNADKTLDTNEVFLEKLRQRIQDRAVALERVIDEKFSALEEKDKELRQLRLAVRDRDHDLERLRCVLSANEATMQSMESLLRARGLEVEQLTATCQNLQWLKEELETKFGHWQKEQESIIQQLQTSLHDRNKEVEDLSATLLCKLGPGQSEVAEELCQRLQRKERMLQDLLSDRNKQAVEHEMEIQGLLQSMGTREQERQAAAEKMVQAFMERNSELQALRQYLGGKELMTSSQTFISNQPAGVTSIGPHHGEQTDQGSMQMPSRDDSTSLTAREEASIPRSTLGDSDTVAGLEKELSNAKEELELMAKKERESQMELSALQSMMAMQEEELQVQAADLESLTRNVQIKEDLIKDLQMQLVDPEDIPAMERLTQEVLLLREKVASVEPQGQEVSGNKRQQLLLMLEGLVDERSRLNEALQAERQLYSSLVKFHAQPENSERDGTLQVELEGAQVLRTRLEEVLGRSLERLSRLESLAAIGGGELESVQAQEMLHLRAEIHQHLEEKRKAEVELKELKAQIEEAGFSSVSHISRNTMLSLCLENAELKEQMGEAMSDGWEVEEDKEKGEVMLETVVAKGCLNENSLQAEFRKVQGKLKSAYNIINLLKEQLLLRSSEGNSKEMPELLVRLAREVDRMNTGLPSLGKHQHQEQENTTTARPGSRPQSLPLGAALSVDGYQLENKSQAQDSGHQPEFSLPGSTKHLRSQLAQCRQRYQDLQEKLLISEATVFAQANQLEKYRAVFSESLVKQDSKQIQVDLQDLGYETCGRSENEAEREETTSPECEEHNNLRPVVLMEGLCSEQGYLDPVLVSPPAKKPLENKPGKQEEFRAHGTPDDSSLLRKDIRDLKAQLQNANKVIQNLRSRVRSLSATSDYSSSLERPRKLRAVATLEGASPHSVTDEDEGWLSDGTGAFYPPGLQAKKDLESLIQRVSQLEAQLPKTGLEGKLAEELRCASWPGKYDSLIQDQARELSYLRQKIREGRGICYLLTQHAKDTVKSFEDLLRSNDIDYYLGQSFREQLAQGGQLTERLTSKLSTKDHKSEKEEAGLEPLALRLSRELQEKEKVIEVLQAKLDTRSLSPPSSHAVSDSHRSASTTSFLSDDIEACSDMDVASEYTHYDEKKPSPSHSAASASQGLKGESSSSPISLPTPQNPPKEASQAHPGFHFHSIPKPASLSQTPMHSALPSFVPFSPSGPPLLGCCETPMVSLAEAQQELQMLQKQLGESVSIAPPASTSTLLSNQTEASSPHYINPAQPHTPTRSTIELGRILEPGYLGSSGQWDMMRPQKGSVSGELSSGSSMYQLNSKPTGADLLEEHLGEIRNLRQRLEESICVNDRLREQLQHRLSSTARENGSTSHFYSQGLESMPQLYNENRALREENQSLQTRLSHASRGHSQEVDHLREALLSSRSQLQELEKELEQQKAERQQLSLQSELQIYESLCENPKKALKAFSLDSCHQVPGELSCLVAEIRALRGQLEQSIEVNNRLRLQLEQQMDRGAGKASLGPIAVGQSFPDKAEPANLHQGSAASPPVRDVGLNSPAMVLPNSSCSAPGSDHAIVTRTNNELSSDDSAAMKNPPKLEVDATDGPFANKHGRHVIGHVDDYDALQQQIGEGKLLIQKILSLMRSARSIPGQEAQDTEAPGNISAHELRSSAKALNHALEESTSLLNMFWRAALPNTHGPVLVGKEGQLMEKELLDLRAQVSQQEQILQNTAARLKRANQRKKSMEQFIVSHLTRTHDVLKKARTNLEMKSFRALTCTPAL.

4 coiled-coil regions span residues 41 to 97 (REDV…RQQE), 162 to 205 (DQYS…LLEE), 236 to 318 (VSES…REML), and 350 to 682 (CSQL…ALRQ). The tract at residues 206 to 236 (PASMEVQPVPKGLPTQQKPDLHETPTTQPPV) is disordered. Positions 219–236 (PTQQKPDLHETPTTQPPV) are enriched in polar residues. The segment at 703–751 (GVTSIGPHHGEQTDQGSMQMPSRDDSTSLTAREEASIPRSTLGDSDTVA) is disordered. Residue Thr705 is modified to Phosphothreonine. The segment covering 724–738 (SRDDSTSLTAREEAS) has biased composition (basic and acidic residues). 3 coiled-coil regions span residues 745–822 (GDSD…QLVD), 856–886 (NKRQ…RQLY), and 949–986 (AQEM…AGFS). Disordered stretches follow at residues 1098–1128 (TGLP…SLPL), 1141–1161 (NKSQ…GSTK), and 1270–1298 (VSPP…DDSS). A compositionally biased stretch (polar residues) spans 1112–1124 (ENTTTARPGSRPQ). Coiled-coil stretches lie at residues 1159–1187 (STKH…SEAT), 1295–1331 (DDSS…LSAT), and 1377–1401 (GLQA…LPKT). Basic and acidic residues predominate over residues 1276–1298 (KPLENKPGKQEEFRAHGTPDDSS). An Olduvai domain is found at 1497-1588 (KDHKSEKEEA…DEKKPSPSHS (92 aa)). Disordered regions lie at residues 1576 to 1637 (THYD…SLSQ), 1736 to 1757 (SSGQ…LSSG), 1805 to 1824 (LSST…QGLE), and 1962 to 2001 (KASL…LNSP). Polar residues predominate over residues 1599–1609 (ESSSSPISLPT). The segment covering 1748–1757 (GSVSGELSSG) has biased composition (low complexity). A coiled-coil region spans residues 1769–1958 (GADLLEEHLG…RLQLEQQMDR (190 aa)). Residues 2148 to 2191 (KEGQLMEKELLDLRAQVSQQEQILQNTAARLKRANQRKKSMEQF) adopt a coiled-coil conformation.

Interacts with PDE4D. Isoform 2 interacts with MAPRE1 and MAPRE3. Isoform 2 forms a pericentrosomal complex with AKAP9, CDK5RAP2 and EB1/MAPRE1; within this complex, may mediate MAPRE1-binding to CDK5RAP2. Interaction with AKAP9 stabilizes both proteins. Isoform 2 interacts (via N-terminus) with CAMSAP2; this interaction is much stronger in the presence of AKAP9. In complex with AKAP9, Isoform 2 recruits CAMSAP2 to the Golgi apparatus. Isoform 2 interacts with unglycosylated LGALS3BP; this interaction may connect the pericentrosomal complex to the gamma-tubulin ring complex (gamma-TuRC) to promote microtubule assembly and acetylation.

Its subcellular location is the cytoplasm. The protein localises to the cytoskeleton. It localises to the microtubule organizing center. The protein resides in the centrosome. It is found in the golgi apparatus. Functionally, functions as an anchor sequestering components of the cAMP-dependent pathway to Golgi and/or centrosomes. In terms of biological role, participates in microtubule dynamics, promoting microtubule assembly. Depending upon the cell context, may act at the level of the Golgi apparatus or that of the centrosome. In complex with AKAP9, recruits CAMSAP2 to the Golgi apparatus and tethers non-centrosomal minus-end microtubules to the Golgi, an important step for polarized cell movement. In complex with AKAP9, EB1/MAPRE1 and CDK5RAP2, contributes to microtubules nucleation and extension from the centrosome to the cell periphery, a crucial process for directed cell migration, mitotic spindle orientation and cell-cycle progression. The sequence is that of Myomegalin (Pde4dip) from Mus musculus (Mouse).